A 306-amino-acid chain; its full sequence is Protein-L-isoaspartate O-methyltransferase 2 (306 aa).

Residues 1-82 (MSTTPPRNKF…ASAATAGGGG (82 aa)) are disordered. Residues 38 to 48 (PAAPTPAPAKP) are compositionally biased toward pro residues. Over residues 54–77 (PRTAAPAPAPVPASAVEQRASAAT) the composition is skewed to low complexity. Serine 142 is an active-site residue.

Belongs to the methyltransferase superfamily. L-isoaspartyl/D-aspartyl protein methyltransferase family.

Its subcellular location is the cytoplasm. It carries out the reaction [protein]-L-isoaspartate + S-adenosyl-L-methionine = [protein]-L-isoaspartate alpha-methyl ester + S-adenosyl-L-homocysteine. Its function is as follows. Catalyzes the methyl esterification of L-isoaspartyl residues in peptides and proteins that result from spontaneous decomposition of normal L-aspartyl and L-asparaginyl residues. It plays a role in the repair and/or degradation of damaged proteins. This is Protein-L-isoaspartate O-methyltransferase 2 from Cupriavidus necator (strain ATCC 17699 / DSM 428 / KCTC 22496 / NCIMB 10442 / H16 / Stanier 337) (Ralstonia eutropha).